Reading from the N-terminus, the 561-residue chain is NAD(P)H-quinone oxidoreductase chain 4 2 (561 aa).

The next 14 membrane-spanning stretches (helical) occupy residues 6–26, 36–56, 87–107, 115–135, 136–156, 169–189, 210–230, 244–264, 275–295, 312–332, 333–353, 376–396, 419–439, and 490–510; these read FPWL…IPFI, WYGL…FWKY, LSMP…FAAW, LFYF…VAQD, LMLL…LISI, FLLY…GMAL, AFEL…LAVF, SAPV…YGLI, HVYF…YGGL, VAHM…GISG, ALLQ…LAGV, IFAL…MSGF, VTVF…LSML, and VAIA…PKIA.

Belongs to the complex I subunit 4 family.

The protein localises to the cellular thylakoid membrane. The enzyme catalyses a plastoquinone + NADH + (n+1) H(+)(in) = a plastoquinol + NAD(+) + n H(+)(out). The catalysed reaction is a plastoquinone + NADPH + (n+1) H(+)(in) = a plastoquinol + NADP(+) + n H(+)(out). In terms of biological role, NDH-1 shuttles electrons from NAD(P)H, via FMN and iron-sulfur (Fe-S) centers, to quinones in the respiratory chain. The immediate electron acceptor for the enzyme in this species is believed to be plastoquinone. Couples the redox reaction to proton translocation (for every two electrons transferred, four hydrogen ions are translocated across the cytoplasmic membrane), and thus conserves the redox energy in a proton gradient. The protein is NAD(P)H-quinone oxidoreductase chain 4 2 of Trichodesmium erythraeum (strain IMS101).